The following is a 488-amino-acid chain: Phenylalanine--tRNA ligase alpha subunit (488 aa).

L-phenylalanine-binding positions include Thr-315, 354–356 (QLD), Phe-394, and Phe-419.

It belongs to the class-II aminoacyl-tRNA synthetase family. Phe-tRNA synthetase alpha subunit type 2 subfamily. As to quaternary structure, tetramer of two alpha and two beta subunits. It depends on Mg(2+) as a cofactor.

Its subcellular location is the cytoplasm. The catalysed reaction is tRNA(Phe) + L-phenylalanine + ATP = L-phenylalanyl-tRNA(Phe) + AMP + diphosphate + H(+). The protein is Phenylalanine--tRNA ligase alpha subunit of Pyrobaculum arsenaticum (strain DSM 13514 / JCM 11321 / PZ6).